Reading from the N-terminus, the 522-residue chain is Sorting nexin-1 (522 aa).

The disordered stretch occupies residues 1 to 142; sequence MASGGGGCSA…ELEEEEQEDQ (142 aa). A phosphoserine mark is found at S32 and S39. Over residues 35–45 the composition is skewed to acidic residues; sequence EAGDSDTEGED. Phosphothreonine occurs at positions 41 and 48. A phosphoserine mark is found at S58 and S72. Positions 132–142 are enriched in acidic residues; the sequence is EELEEEEQEDQ. The region spanning 143-272 is the PX domain; that stretch reads FDLTVGITDP…EFLEKEELPR (130 aa). A 1,2-diacyl-sn-glycero-3-phospho-(1D-myo-inositol-3-phosphate)-binding residues include R186, S188, and K214. S188 is subject to Phosphoserine. Position 237 is an N6-acetyllysine (K237). R238 serves as a coordination point for a 1,2-diacyl-sn-glycero-3-phospho-(1D-myo-inositol-3-phosphate). S280 carries the phosphoserine modification. The membrane-binding amphipathic helix stretch occupies residues 281 to 298; it reads GAGLLKMFNKATDAVSKM. Positions 302–522 constitute a BAR domain; sequence MNESDIWFEE…AFLPEAKAIS (221 aa).

Belongs to the sorting nexin family. Predominantly forms heterodimers with BAR domain-containing sorting nexins SNX5, SNX6 and SNX32; can self-associate to form homodimers. The heterodimers are proposed to self-assemble into helical arrays on the membrane to stabilize and expand local membrane curvature underlying endosomal tubule formation. Thought to be a component of the originally described retromer complex (also called SNX-BAR retromer) which is a pentamer containing the heterotrimeric retromer cargo-selective complex (CSC), also described as vacuolar protein sorting subcomplex (VPS) and a heterodimeric membrane-deforming subcomplex formed between SNX1 or SNX2 and SNX5 or SNX6 (also called SNX-BAR subcomplex); the respective CSC and SNX-BAR subcomplexes associate with low affinity. Interacts with SNX5, SNX6, SNX32, VPS26A, VPS29, VPS35, DRD5, DENND5A, KALRN, RHOG (GDP-bound form). The interaction with SNX2 is reported controversially. Interacts with DNAJC13; prevented by presence of HGS. Interacts with HGS.

The protein resides in the endosome membrane. Its subcellular location is the golgi apparatus. It is found in the trans-Golgi network membrane. The protein localises to the early endosome membrane. It localises to the cell projection. The protein resides in the lamellipodium. Involved in several stages of intracellular trafficking. Interacts with membranes containing phosphatidylinositol 3-phosphate (PtdIns(3P)) or phosphatidylinositol 3,5-bisphosphate (PtdIns(3,5)P2). Acts in part as component of the retromer membrane-deforming SNX-BAR subcomplex. The SNX-BAR retromer mediates retrograde transport of cargo proteins from endosomes to the trans-Golgi network (TGN) and is involved in endosome-to-plasma membrane transport for cargo protein recycling. The SNX-BAR subcomplex functions to deform the donor membrane into a tubular profile called endosome-to-TGN transport carrier (ETC). Can sense membrane curvature and has in vitro vesicle-to-membrane remodeling activity. Involved in retrograde endosome-to-TGN transport of lysosomal enzyme receptors (IGF2R, M6PR and SORT1). Plays a role in targeting ligand-activated EGFR to the lysosomes for degradation after endocytosis from the cell surface and release from the Golgi. Involvement in retromer-independent endocytic trafficking of P2RY1 and lysosomal degradation of protease-activated receptor-1/F2R. Promotes KALRN- and RHOG-dependent but retromer-independent membrane remodeling such as lamellipodium formation; the function is dependent on GEF activity of KALRN. Required for endocytosis of DRD5 upon agonist stimulation but not for basal receptor trafficking. This Bos taurus (Bovine) protein is Sorting nexin-1 (SNX1).